The primary structure comprises 523 residues: Probable glucose-1-phosphate adenylyltransferase large subunit, chloroplastic (523 aa).

The protein belongs to the bacterial/plant glucose-1-phosphate adenylyltransferase family. Heterotetramer.

The protein resides in the plastid. The protein localises to the chloroplast. The enzyme catalyses alpha-D-glucose 1-phosphate + ATP + H(+) = ADP-alpha-D-glucose + diphosphate. It functions in the pathway glycan biosynthesis; starch biosynthesis. Its activity is regulated as follows. Activated by 3'phosphoglycerate, inhibited by orthophosphate. Allosteric regulation. Its function is as follows. This protein plays a role in synthesis of starch. It catalyzes the synthesis of the activated glycosyl donor, ADP-glucose from Glc-1-P and ATP. This Arabidopsis thaliana (Mouse-ear cress) protein is Probable glucose-1-phosphate adenylyltransferase large subunit, chloroplastic.